Reading from the N-terminus, the 278-residue chain is uncharacterized protein (278 aa).

Positions proline 127–phenylalanine 151 are enriched in pro residues. The segment at proline 127–leucine 174 is disordered. Positions proline 164–leucine 174 are enriched in low complexity.

This is an uncharacterized protein from Botryotinia fuckeliana (Noble rot fungus).